The following is a 616-amino-acid chain: RNA-directed RNA polymerase (616 aa).

The enzyme catalyses RNA(n) + a ribonucleoside 5'-triphosphate = RNA(n+1) + diphosphate. Functionally, RNA-dependent RNA polymerase which replicates the viral genome. The sequence is that of RNA-directed RNA polymerase from White clover cryptic virus 1 (isolate Boccardo/2004) (WCCV-1).